The following is a 120-amino-acid chain: Membrane-anchored ubiquitin-fold protein 5 (120 aa).

Residues 7 to 72 (IELKFRLADG…ILENNKTLSE (66 aa)) enclose the Ubiquitin-like domain. A lipid anchor (S-palmitoyl cysteine) is attached at C115. At C117 the chain carries Cysteine methyl ester. C117 is lipidated: S-geranylgeranyl cysteine. Positions 118 to 120 (CIL) are cleaved as a propeptide — removed in mature form.

As to expression, ubiquitous.

The protein resides in the cell membrane. In terms of biological role, may serve as docking site to facilitate the association of other proteins to the plasma membrane. This chain is Membrane-anchored ubiquitin-fold protein 5 (MUB5), found in Arabidopsis thaliana (Mouse-ear cress).